The following is a 211-amino-acid chain: uncharacterized protein (211 aa).

Residues 1–33 (MQNGTEDKSNIPARSNDDVLPPLAVRLTMKVMR) lie on the Cytoplasmic side of the membrane. A helical transmembrane segment spans residues 34–54 (LIFIGKMFAYSFVPFPPFKLL). The Lumenal portion of the chain corresponds to 55-58 (TFDN). A helical transmembrane segment spans residues 59–79 (TVGWFVAYSAIVSIWGFAVWM). Topologically, residues 80–116 (ERGYRHKINLLPPRCTKIRCSRCNTRIRSPNWFKYKN) are cytoplasmic. A helical transmembrane segment spans residues 117-137 (WLYFFLLYVSLTTSNLIIQLA). Over 138–162 (SFMTEMSRRGISVPGTKDPGKRDYL) the chain is Lumenal. Residues 163–183 (GLIIPMRFIGAFIHYMTANLF) traverse the membrane as a helical segment. Over 184–211 (KEYYLHNGPLEKNDRPSTDEKTSENETL) the chain is Cytoplasmic.

It localises to the endoplasmic reticulum membrane. This is an uncharacterized protein from Saccharomyces cerevisiae (strain ATCC 204508 / S288c) (Baker's yeast).